The following is a 269-amino-acid chain: Monofunctional glycosyltransferase (269 aa).

Residues 46 to 66 (ILLTILIIIALFIGIMYFLST) traverse the membrane as a helical segment.

It belongs to the glycosyltransferase 51 family.

The protein localises to the cell membrane. The catalysed reaction is [GlcNAc-(1-&gt;4)-Mur2Ac(oyl-L-Ala-gamma-D-Glu-L-Lys-D-Ala-D-Ala)](n)-di-trans,octa-cis-undecaprenyl diphosphate + beta-D-GlcNAc-(1-&gt;4)-Mur2Ac(oyl-L-Ala-gamma-D-Glu-L-Lys-D-Ala-D-Ala)-di-trans,octa-cis-undecaprenyl diphosphate = [GlcNAc-(1-&gt;4)-Mur2Ac(oyl-L-Ala-gamma-D-Glu-L-Lys-D-Ala-D-Ala)](n+1)-di-trans,octa-cis-undecaprenyl diphosphate + di-trans,octa-cis-undecaprenyl diphosphate + H(+). The protein operates within cell wall biogenesis; peptidoglycan biosynthesis. Functionally, peptidoglycan polymerase that catalyzes glycan chain elongation using lipid-linked disaccharide-pentapeptide as the substrate. The polypeptide is Monofunctional glycosyltransferase (Staphylococcus aureus (strain Newman)).